Reading from the N-terminus, the 437-residue chain is tRNA(Ile2) 2-agmatinylcytidine synthetase TiaS (437 aa).

The protein belongs to the TiaS family.

It localises to the cytoplasm. The enzyme catalyses cytidine(34) in tRNA(Ile2) + agmatine + ATP + H2O = 2-agmatinylcytidine(34) in tRNA(Ile2) + AMP + 2 phosphate + 2 H(+). In terms of biological role, ATP-dependent agmatine transferase that catalyzes the formation of 2-agmatinylcytidine (agm2C) at the wobble position (C34) of tRNA(Ile2), converting the codon specificity from AUG to AUA. The chain is tRNA(Ile2) 2-agmatinylcytidine synthetase TiaS from Thermoplasma volcanium (strain ATCC 51530 / DSM 4299 / JCM 9571 / NBRC 15438 / GSS1).